A 233-amino-acid polypeptide reads, in one-letter code: Demethylmenaquinone methyltransferase (233 aa).

S-adenosyl-L-methionine contacts are provided by residues T58, D79, and N106–A107.

Belongs to the class I-like SAM-binding methyltransferase superfamily. MenG/UbiE family.

It carries out the reaction a 2-demethylmenaquinol + S-adenosyl-L-methionine = a menaquinol + S-adenosyl-L-homocysteine + H(+). Its pathway is quinol/quinone metabolism; menaquinone biosynthesis; menaquinol from 1,4-dihydroxy-2-naphthoate: step 2/2. Methyltransferase required for the conversion of demethylmenaquinol (DMKH2) to menaquinol (MKH2). The sequence is that of Demethylmenaquinone methyltransferase from Bacillus velezensis (strain DSM 23117 / BGSC 10A6 / LMG 26770 / FZB42) (Bacillus amyloliquefaciens subsp. plantarum).